Here is a 225-residue protein sequence, read N- to C-terminus: NAD(P)H-quinone oxidoreductase subunit K, chloroplastic (225 aa).

[4Fe-4S] cluster-binding residues include C43, C44, C108, and C139.

The protein belongs to the complex I 20 kDa subunit family. In terms of assembly, NDH is composed of at least 16 different subunits, 5 of which are encoded in the nucleus. Requires [4Fe-4S] cluster as cofactor.

Its subcellular location is the plastid. The protein localises to the chloroplast thylakoid membrane. It catalyses the reaction a plastoquinone + NADH + (n+1) H(+)(in) = a plastoquinol + NAD(+) + n H(+)(out). The catalysed reaction is a plastoquinone + NADPH + (n+1) H(+)(in) = a plastoquinol + NADP(+) + n H(+)(out). Its function is as follows. NDH shuttles electrons from NAD(P)H:plastoquinone, via FMN and iron-sulfur (Fe-S) centers, to quinones in the photosynthetic chain and possibly in a chloroplast respiratory chain. The immediate electron acceptor for the enzyme in this species is believed to be plastoquinone. Couples the redox reaction to proton translocation, and thus conserves the redox energy in a proton gradient. The sequence is that of NAD(P)H-quinone oxidoreductase subunit K, chloroplastic from Vitis vinifera (Grape).